A 188-amino-acid chain; its full sequence is Mitochondrial import receptor subunit TOM20-1 (188 aa).

The Cytoplasmic segment spans residues 1–164 (MDKLNFFEEI…VVKNKKSSDE (164 aa)). The chain crosses the membrane as a helical span at residues 165–182 (KYIVMGWVILAIGVVACI). The Mitochondrial intermembrane segment spans residues 183 to 188 (SFRKLR).

The protein belongs to the Tom20 family. In terms of assembly, forms part of the preprotein translocase complex of the outer mitochondrial membrane (TOM complex) which consists of at least 6 different proteins (TOM5, TOM6, TOM7, TOM20, TOM22/TOM9 and TOM40). Component of a mitochondrial large protein complex that contains, at least, MIC60, DGS1, TOM40, TOM20 proteins, and petC/RISP. As to expression, barely detected in roots.

The protein localises to the mitochondrion outer membrane. In terms of biological role, central component of the receptor complex responsible for the recognition and translocation of cytosolically synthesized mitochondrial preproteins. Together with TOM22 functions as the transit peptide receptor at the surface of the mitochondrion outer membrane and facilitates the movement of preproteins into the translocation pore. The chain is Mitochondrial import receptor subunit TOM20-1 from Arabidopsis thaliana (Mouse-ear cress).